A 152-amino-acid polypeptide reads, in one-letter code: Flagellar assembly factor FliW (152 aa).

This sequence belongs to the FliW family. Interacts with translational regulator CsrA and flagellin(s).

It is found in the cytoplasm. Acts as an anti-CsrA protein, binds CsrA and prevents it from repressing translation of its target genes, one of which is flagellin. Binds to flagellin and participates in the assembly of the flagellum. This Caldicellulosiruptor bescii (strain ATCC BAA-1888 / DSM 6725 / KCTC 15123 / Z-1320) (Anaerocellum thermophilum) protein is Flagellar assembly factor FliW.